We begin with the raw amino-acid sequence, 558 residues long: T-complex protein 1 subunit gamma (558 aa).

Cysteines 381 and 387 form a disulfide.

It belongs to the TCP-1 chaperonin family. In terms of assembly, heterooligomeric complex of about 850 to 900 kDa that forms two stacked rings, 12 to 16 nm in diameter.

Its subcellular location is the cytoplasm. Molecular chaperone; assists the folding of proteins upon ATP hydrolysis. Known to play a role, in vitro, in the folding of actin and tubulin. This chain is T-complex protein 1 subunit gamma, found in Thalassiosira weissflogii (Marine diatom).